Reading from the N-terminus, the 430-residue chain is Adenylosuccinate synthetase (430 aa).

GTP-binding positions include 12 to 18 and 40 to 42; these read GDEGKGK and GHT. D13 acts as the Proton acceptor in catalysis. Positions 13 and 40 each coordinate Mg(2+). Residues 13-16, 38-41, T130, R144, Q224, T239, and R303 contribute to the IMP site; these read DEGK and NAGH. Residue H41 is the Proton donor of the active site. Residue 299–305 coordinates substrate; it reads VNTGRKR. Residues R305, 331 to 333, and 413 to 415 contribute to the GTP site; these read KLD and STS.

The protein belongs to the adenylosuccinate synthetase family. Homodimer. The cofactor is Mg(2+).

Its subcellular location is the cytoplasm. The enzyme catalyses IMP + L-aspartate + GTP = N(6)-(1,2-dicarboxyethyl)-AMP + GDP + phosphate + 2 H(+). The protein operates within purine metabolism; AMP biosynthesis via de novo pathway; AMP from IMP: step 1/2. Its function is as follows. Plays an important role in the de novo pathway of purine nucleotide biosynthesis. Catalyzes the first committed step in the biosynthesis of AMP from IMP. The sequence is that of Adenylosuccinate synthetase from Rhodopseudomonas palustris (strain BisB18).